A 901-amino-acid polypeptide reads, in one-letter code: Core protein VP3 (901 aa).

This sequence belongs to the orbivirus VP3 family.

The protein localises to the virion. Functionally, the VP3 protein is one of the five proteins (with VP1, VP4, VP6 and VP7) which form the inner capsid of the virus. The sequence is that of Core protein VP3 (Segment-3) from Bluetongue virus 10 (isolate USA) (BTV 10).